A 94-amino-acid polypeptide reads, in one-letter code: UPF0768 protein YBL029C-A (94 aa).

It belongs to the UPF0768 family.

Its subcellular location is the cell membrane. The polypeptide is UPF0768 protein YBL029C-A (Saccharomyces cerevisiae (strain ATCC 204508 / S288c) (Baker's yeast)).